The following is a 63-amino-acid chain: Large ribosomal subunit protein uL29 (63 aa).

The protein belongs to the universal ribosomal protein uL29 family.

The protein is Large ribosomal subunit protein uL29 of Bordetella avium (strain 197N).